The sequence spans 329 residues: 2-oxoglutarate-dependent dioxygenase mpl2 (329 aa).

Positions 183–288 (PACPLRLLHY…RYSVVFFFDG (106 aa)) constitute a Fe2OG dioxygenase domain. 3 residues coordinate Fe cation: H211, D213, and H269. R279 lines the 2-oxoglutarate pocket.

Belongs to the iron/ascorbate-dependent oxidoreductase family. Fe(2+) serves as cofactor.

The protein operates within mycotoxin biosynthesis. Its function is as follows. 2-oxoglutarate-dependent dioxygenase; part of the gene cluster that mediates the biosynthesis of the mycotoxin citrinin, a hepato-nephrotoxic compound to humans due to inhibition of respiration complex III. The pathway begins with the synthesis of a keto-aldehyde intermediate by the citrinin PKS (pksCT) from successive condensations of 4 malonyl-CoA units, presumably with a simple acetyl-CoA starter unit. Release of the keto-aldehyde intermediate is consistent with the presence of the C-terminal reductive release domain. Mp11 collaborates with pksCT by catalyzing the hydrolysis of ACP-bound acyl intermediates to free the ACP from stalled intermediates. Mpl2 then catalyzes the oxidation of the C-12 methyl of the ketone intermediate to an alcohol intermediate which is further oxidized by the oxidoreductase mpl7 to produce a bisaldehyde intermediate. The fourth catalytic step is catalyzed by the mpl4 aldehyde dehydrogenase. The final transformation is the reduction of C-3 by mpl6 to provide the chemically stable citrinin nucleus. This chain is 2-oxoglutarate-dependent dioxygenase mpl2, found in Monascus purpureus (Red mold).